We begin with the raw amino-acid sequence, 1262 residues long: MGDMKTPDFDDLLAAFDIPDPTSLDAKEAIQAPSEENESPLKSSGMCIDENVSLSHSGSAPDVPAVSVIVKNTSRQESFEAEKDHIAPSLLHNGFRGSDLPPDSHHCGKFDSTFINGDSARSFTSKLEPSKSEPLPTFNQFSPISSPEPEDPVKDNGFGIKSKHSDSYFPPPPGTVGGPVLEALSKFPVPELHMFDHFCKKEPKPEPLPLESQQEHEQGGQKVVEPHKDLDSSRFFGEALEFNSHPSNSIGEPKKLAPELSACSSVPPRQRLKPAHSKLSSCVAALVALQAKRVANVTKEDQPGHTKDSSGPTKEGSKGSPKMPKSPKSPRSPLEATRKSIKPSDSPRSICSDSSSKGSPSVAASSPPAIPKVRIKTIKTSSGEIKRTVTRILPDPDDPSKSPAESPAGSTITEAPSEAPGDEGTAMPVEEHFSEAGIHSGSPQGDRKGDENMIKTSDSSSPCRISGSRVPKGSALNSQASKKQQSTAPQASTPAASLLPKAVHLANLNLVPHSVAASVTAKSSAQRRSQPQVTQMTVPLVHQVKKAAPLIVEVFNKVLHSSNPVPLYAPNLSPPADSRIHVPASGYCCLECGDAFALEKSLSQHYSRRSVHIEVLCTLCSKTLLFFNKCSLLRHARDHKSKGLVMQCSQLLVKPISADQMFVAAPVNSTAPATPAASSSPKPSPTLDNASSVIPALPLYPDPVRLIRYGTKCPECHKQMRDYMVLATHFQRTTEETEGLTCQVCQMLLPNQCSFCAHQRIHAHKSPYCCPECGVLCRSAYFQTHVKENCLHYARKVGYRCIHCGVIHLTLALLKSHIQERHCQVFHKCAFCPMAFKTASSTMDHSTTQHPTQPHKPSQLIYKCSCEMVFNKKRHIQQHFYQNVSKTQAGVFKCPECPLLFLQKPELMQHVKNTHGVPRNVEELSSLQSSTDTSSNRPGSRAPAEPPATNVAARGSSLTAGRWGRPEAHRRAEARPRMRSTGWTCQECQEWVPDRESYVSHMKKSHGRTLKRYPCRQCEQSFHNPSSLRKHIRNNHDTVKKVYTCGYCTEDSPSFPRPSLLESHISLMHGIRNPDLSQTSKVRHPGGPSPQVNHLKRPVSRMADAPGTSNGATVSSTKRHKSLFQCAKCTFATDSELEFQSHIPQHQVDSSTAQCLLCGLCYTSTSSLNRHLFIVHKVRDQEEGGEDIVEVKVEAPDSEACSGEEVAMETKENGLEECASEPLVTDLGGQQGLALDEDSAQDPQNQPQASQDQNSHALSPQV.

A disordered region spans residues 23–45; the sequence is SLDAKEAIQAPSEENESPLKSSG. Residues serine 78, serine 142, serine 145, and serine 146 each carry the phosphoserine modification. Disordered regions lie at residues 122 to 174, 200 to 278, and 294 to 494; these read SFTS…PPPG, KKEP…AHSK, and VANV…ASTP. Residues lysine 200 and lysine 204 each participate in a glycyl lysine isopeptide (Lys-Gly) (interchain with G-Cter in SUMO2) cross-link. 2 stretches are compositionally biased toward basic and acidic residues: residues 213 to 232 and 298 to 308; these read QQEH…DLDS and TKEDQPGHTKD. Over residues 343–367 the composition is skewed to low complexity; that stretch reads PSDSPRSICSDSSSKGSPSVAASSP. A compositionally biased stretch (polar residues) spans 454 to 463; the sequence is IKTSDSSSPC. The span at 484-494 shows a compositional bias: low complexity; it reads QQSTAPQASTP. The residue at position 529 (serine 529) is a Phosphoserine. A Glycyl lysine isopeptide (Lys-Gly) (interchain with G-Cter in SUMO2) cross-link involves residue lysine 546. Phosphoserine is present on serine 573. A C2H2-type 1; atypical zinc finger spans residues 587-612; it reads YCCLECGDAFALEKSLSQHYSRRSVH. Residues 615 to 639 form a C2H2-type 2; atypical zinc finger; the sequence is VLCTLCSKTLLFFNKCSLLRHARDH. Residue serine 691 is modified to Phosphoserine. The segment at 711–731 adopts a C2H2-type 3; degenerate zinc-finger fold; it reads TKCPECHKQMRDYMVLATHFQ. The segment at 740–764 adopts a C2H2-type 4 zinc-finger fold; that stretch reads LTCQVCQMLLPNQCSFCAHQRIHAH. A C2H2-type 5; atypical zinc finger spans residues 768 to 790; sequence YCCPECGVLCRSAYFQTHVKENC. 3 C2H2-type zinc fingers span residues 799–822, 827–850, and 892–915; these read YRCI…QERH, HKCA…TTQH, and FKCP…KNTH. Over residues 924–935 the composition is skewed to low complexity; that stretch reads LSSLQSSTDTSS. The tract at residues 924–979 is disordered; that stretch reads LSSLQSSTDTSSNRPGSRAPAEPPATNVAARGSSLTAGRWGRPEAHRRAEARPRMR. Residues 964–976 show a composition bias toward basic and acidic residues; it reads GRPEAHRRAEARP. 2 consecutive C2H2-type zinc fingers follow at residues 983 to 1006 and 1013 to 1036; these read WTCQ…KKSH and YPCR…RNNH. The segment at 1043 to 1069 adopts a C2H2-type 11; atypical zinc-finger fold; sequence YTCGYCTEDSPSFPRPSLLESHISLMH. Position 1089 is a phosphoserine (serine 1089). The C2H2-type 12; atypical zinc-finger motif lies at 1124 to 1146; the sequence is FQCAKCTFATDSELEFQSHIPQH. The C2H2-type 13 zinc finger occupies 1153–1176; that stretch reads AQCLLCGLCYTSTSSLNRHLFIVH. Phosphoserine occurs at positions 1198 and 1202. Residues 1222-1262 are disordered; it reads PLVTDLGGQQGLALDEDSAQDPQNQPQASQDQNSHALSPQV. The segment covering 1241 to 1262 has biased composition (polar residues); that stretch reads QDPQNQPQASQDQNSHALSPQV.

This sequence belongs to the krueppel C2H2-type zinc-finger protein family. Interacts with ZMYND8. As to expression, expressed in the brain.

It is found in the nucleus. In terms of biological role, may be involved in transcriptional regulation. This is Zinc finger protein 592 (Znf592) from Mus musculus (Mouse).